A 760-amino-acid polypeptide reads, in one-letter code: ATP-dependent zinc metalloprotease FtsH (760 aa).

At 1–5 (MNRKN) the chain is on the cytoplasmic side. Residues 6-26 (VTRTITAIAVVVLLGWSFFYF) form a helical membrane-spanning segment. At 27-110 (SDDTRGYKPV…KVSTVVNQGS (84 aa)) the chain is on the extracellular side. The helical transmembrane segment at 111-131 (ILGELLVYVLPLLLLVGLFVM) threads the bilayer. Residues 132-760 (FSRMQGGARM…EVSRTKPAHG (629 aa)) are Cytoplasmic-facing. An ATP-binding site is contributed by 203-210 (GPPGTGKT). Zn(2+) is bound at residue His425. Glu426 is a catalytic residue. Positions 429 and 501 each coordinate Zn(2+). The tract at residues 616 to 760 (DFGGRIPSDK…EVSRTKPAHG (145 aa)) is disordered. Over residues 650 to 669 (AFKAAIAQATQAAEAARSDA) the composition is skewed to low complexity. Over residues 740–750 (GSDESSAEQDD) the composition is skewed to acidic residues.

In the central section; belongs to the AAA ATPase family. The protein in the C-terminal section; belongs to the peptidase M41 family. Homohexamer. Zn(2+) is required as a cofactor.

The protein resides in the cell membrane. In terms of biological role, acts as a processive, ATP-dependent zinc metallopeptidase for both cytoplasmic and membrane proteins. Plays a role in the quality control of integral membrane proteins. This Mycobacterium tuberculosis (strain CDC 1551 / Oshkosh) protein is ATP-dependent zinc metalloprotease FtsH.